Here is a 141-residue protein sequence, read N- to C-terminus: 3-hydroxyacyl-[acyl-carrier-protein] dehydratase FabZ (141 aa).

Residue His-48 is part of the active site.

This sequence belongs to the thioester dehydratase family. FabZ subfamily.

The protein localises to the cytoplasm. It catalyses the reaction a (3R)-hydroxyacyl-[ACP] = a (2E)-enoyl-[ACP] + H2O. Involved in unsaturated fatty acids biosynthesis. Catalyzes the dehydration of short chain beta-hydroxyacyl-ACPs and long chain saturated and unsaturated beta-hydroxyacyl-ACPs. This Streptococcus thermophilus (strain CNRZ 1066) protein is 3-hydroxyacyl-[acyl-carrier-protein] dehydratase FabZ.